The chain runs to 414 residues: Solute carrier family 25 member 46-B (414 aa).

Basic and acidic residues predominate over residues 1-13; it reads MQPRRPDRFDGLE. Residues 1–89 are disordered; the sequence is MQPRRPDRFD…AFGEENSGSS (89 aa). The segment covering 29 to 50 has biased composition (polar residues); the sequence is YQSSFPARSLSSSGDLSQQWVT. The stretch at 92–183 is one Solcar 1 repeat; the sequence is QVNRFAGFGI…GMLSEFTHLP (92 aa). 6 consecutive transmembrane segments (helical) span residues 99-119, 159-179, 198-218, 254-274, 310-330, and 379-399; these read FGIG…CIVL, MGST…LSEF, HLLL…ASLI, LLPL…HYII, FPEL…LYPL, and LGFY…AIVL. The Solcar 2 repeat unit spans residues 307-412; the sequence is EDYFPELLAN…KIIYSSVVQT (106 aa).

It belongs to the mitochondrial carrier (TC 2.A.29) family.

The protein resides in the mitochondrion outer membrane. Functionally, may play a role in mitochondrial dynamics by controlling mitochondrial membrane fission. The protein is Solute carrier family 25 member 46-B (slc25a46-b) of Xenopus laevis (African clawed frog).